The following is a 407-amino-acid chain: Peptidase T (407 aa).

His82 provides a ligand contact to Zn(2+). Asp84 is a catalytic residue. Asp143 contacts Zn(2+). Glu177 acts as the Proton acceptor in catalysis. Residues Glu178, Asp200, and His382 each coordinate Zn(2+).

It belongs to the peptidase M20B family. It depends on Zn(2+) as a cofactor.

The protein resides in the cytoplasm. It catalyses the reaction Release of the N-terminal residue from a tripeptide.. Cleaves the N-terminal amino acid of tripeptides. This is Peptidase T from Streptococcus pyogenes serotype M6 (strain ATCC BAA-946 / MGAS10394).